Here is a 226-residue protein sequence, read N- to C-terminus: Cytidylate kinase (226 aa).

Residue Gly11 to Thr19 coordinates ATP.

This sequence belongs to the cytidylate kinase family. Type 1 subfamily.

The protein localises to the cytoplasm. The catalysed reaction is CMP + ATP = CDP + ADP. It carries out the reaction dCMP + ATP = dCDP + ADP. The sequence is that of Cytidylate kinase from Pelotomaculum thermopropionicum (strain DSM 13744 / JCM 10971 / SI).